Here is a 246-residue protein sequence, read N- to C-terminus: 5-oxoprolinase subunit A (246 aa).

This sequence belongs to the LamB/PxpA family. As to quaternary structure, forms a complex composed of PxpA, PxpB and PxpC.

It catalyses the reaction 5-oxo-L-proline + ATP + 2 H2O = L-glutamate + ADP + phosphate + H(+). Catalyzes the cleavage of 5-oxoproline to form L-glutamate coupled to the hydrolysis of ATP to ADP and inorganic phosphate. The chain is 5-oxoprolinase subunit A from Vibrio cholerae serotype O1 (strain M66-2).